The following is a 299-amino-acid chain: ATP phosphoribosyltransferase (299 aa).

Belongs to the ATP phosphoribosyltransferase family. Long subfamily. Mg(2+) is required as a cofactor.

It is found in the cytoplasm. The catalysed reaction is 1-(5-phospho-beta-D-ribosyl)-ATP + diphosphate = 5-phospho-alpha-D-ribose 1-diphosphate + ATP. Its pathway is amino-acid biosynthesis; L-histidine biosynthesis; L-histidine from 5-phospho-alpha-D-ribose 1-diphosphate: step 1/9. With respect to regulation, feedback inhibited by histidine. Its function is as follows. Catalyzes the condensation of ATP and 5-phosphoribose 1-diphosphate to form N'-(5'-phosphoribosyl)-ATP (PR-ATP). Has a crucial role in the pathway because the rate of histidine biosynthesis seems to be controlled primarily by regulation of HisG enzymatic activity. This Campylobacter lari (strain RM2100 / D67 / ATCC BAA-1060) protein is ATP phosphoribosyltransferase.